The sequence spans 207 residues: Acyl-homoserine-lactone synthase (207 aa).

Belongs to the autoinducer synthase family.

The catalysed reaction is a fatty acyl-[ACP] + S-adenosyl-L-methionine = an N-acyl-L-homoserine lactone + S-methyl-5'-thioadenosine + holo-[ACP] + H(+). Functionally, required for the synthesis of N-butanoyl-L-homoserine lactone (BHL), an autoinducer molecule which binds to AsaR. In Aeromonas salmonicida, this protein is Acyl-homoserine-lactone synthase (asaI).